Reading from the N-terminus, the 305-residue chain is rRNA 2'-O-methyltransferase fibrillarin (305 aa).

Residues 1-70 form a disordered region; that stretch reads MAYTPGSRGG…SGGRGGAKGG (70 aa). The segment covering 7-69 has biased composition (gly residues); it reads SRGGRGGSRG…SSGGRGGAKG (63 aa). Phosphoserine occurs at positions 111 and 114. Residues 160–161, 179–180, 204–205, and 224–227 contribute to the S-adenosyl-L-methionine site; these read TS, EF, DA, and DVAQ.

This sequence belongs to the methyltransferase superfamily. Fibrillarin family. In terms of assembly, component of box C/D small nucleolar ribonucleoprotein (snoRNP) particles. By homology to other fibrillarins, some or all of the N-terminal domain arginines are modified to asymmetric dimethylarginine (DMA).

The protein localises to the nucleus. The protein resides in the nucleolus. The enzyme catalyses L-glutaminyl-[histone H2A] + S-adenosyl-L-methionine = N(5)-methyl-L-glutaminyl-[histone H2A] + S-adenosyl-L-homocysteine + H(+). Its function is as follows. S-adenosyl-L-methionine-dependent methyltransferase that has the ability to methylate both RNAs and proteins. Involved in pre-rRNA processing by catalyzing the site-specific 2'-hydroxyl methylation of ribose moieties in pre-ribosomal RNA. Site specificity is provided by a guide RNA that base pairs with the substrate. Methylation occurs at a characteristic distance from the sequence involved in base pairing with the guide RNA. Also acts as a protein methyltransferase by mediating methylation of 'Gln-105' of histone H2A (H2AQ105me), a modification that impairs binding of the FACT complex and is specifically present at 35S ribosomal DNA locus. This chain is rRNA 2'-O-methyltransferase fibrillarin (fib1), found in Schizosaccharomyces pombe (strain 972 / ATCC 24843) (Fission yeast).